The sequence spans 436 residues: Trigger factor (436 aa).

The 86-residue stretch at 161–246 folds into the PPIase FKBP-type domain; the sequence is GDQVIVDFDG…VREVKEPTLP (86 aa).

It belongs to the FKBP-type PPIase family. Tig subfamily.

Its subcellular location is the cytoplasm. It carries out the reaction [protein]-peptidylproline (omega=180) = [protein]-peptidylproline (omega=0). Involved in protein export. Acts as a chaperone by maintaining the newly synthesized protein in an open conformation. Functions as a peptidyl-prolyl cis-trans isomerase. The chain is Trigger factor from Thioalkalivibrio sulfidiphilus (strain HL-EbGR7).